Consider the following 258-residue polypeptide: tRNA pseudouridine synthase A (258 aa).

The Nucleophile role is filled by aspartate 52. Tyrosine 110 is a binding site for substrate.

The protein belongs to the tRNA pseudouridine synthase TruA family. Homodimer.

The enzyme catalyses uridine(38/39/40) in tRNA = pseudouridine(38/39/40) in tRNA. In terms of biological role, formation of pseudouridine at positions 38, 39 and 40 in the anticodon stem and loop of transfer RNAs. This chain is tRNA pseudouridine synthase A, found in Francisella tularensis subsp. mediasiatica (strain FSC147).